The sequence spans 105 residues: Thioredoxin-like protein slr0233 (105 aa).

A Thioredoxin domain is found at 1-102 (MAVKKQFANF…QAAQLIQQLQ (102 aa)). A disulfide bond links Cys30 and Cys33.

The protein belongs to the thioredoxin family.

The chain is Thioredoxin-like protein slr0233 from Synechocystis sp. (strain ATCC 27184 / PCC 6803 / Kazusa).